Here is a 46-residue protein sequence, read N- to C-terminus: Diuretic hormone (46 aa).

At Ile-46 the chain carries Isoleucine amide.

Belongs to the sauvagine/corticotropin-releasing factor/urotensin I family.

The protein resides in the secreted. In terms of biological role, regulation of fluid secretion. Stimulates primary urine secretion by Malpighian tubules and causes a dose-dependent stimulation of cAMP levels in the tubules. In Periplaneta americana (American cockroach), this protein is Diuretic hormone.